A 464-amino-acid chain; its full sequence is Trigger factor (464 aa).

The PPIase FKBP-type domain occupies 166-245 (GDFLTIDITA…VKAVKERELP (80 aa)). The disordered stretch occupies residues 426-464 (FVRPGGEEEAPAAEVTEADTAEGEATEVPAEDEKAEAKA). Acidic residues predominate over residues 432–455 (EEEAPAAEVTEADTAEGEATEVPA).

The protein belongs to the FKBP-type PPIase family. Tig subfamily.

The protein resides in the cytoplasm. The enzyme catalyses [protein]-peptidylproline (omega=180) = [protein]-peptidylproline (omega=0). Its function is as follows. Involved in protein export. Acts as a chaperone by maintaining the newly synthesized protein in an open conformation. Functions as a peptidyl-prolyl cis-trans isomerase. In Pseudarthrobacter chlorophenolicus (strain ATCC 700700 / DSM 12829 / CIP 107037 / JCM 12360 / KCTC 9906 / NCIMB 13794 / A6) (Arthrobacter chlorophenolicus), this protein is Trigger factor.